Reading from the N-terminus, the 546-residue chain is Cytochrome P450 monooxygenase 219 (546 aa).

Positions 1 to 22 (MATLIVLLYGLLAFGTVWLVRR) are cleaved as a signal peptide. 2 N-linked (GlcNAc...) asparagine glycosylation sites follow: N367 and N441. Heme is bound at residue C487.

The protein belongs to the cytochrome P450 family. Heme is required as a cofactor.

Its pathway is secondary metabolite biosynthesis. In terms of biological role, cytochrome P450 monooxygenase that is able to use testosterone, anthracene, carbazole, pyrene, phenanthrene and trans-stilbene as substrates for oxidation. These multifunctional properties against a series of polycyclic aromatic hydrocarbons (PAHs) suggest that CYP219 would play important roles, at least in part, in fungal metabolic systems involved in xenobiotic detoxification. This Postia placenta (strain ATCC 44394 / Madison 698-R) (Brown rot fungus) protein is Cytochrome P450 monooxygenase 219.